The primary structure comprises 343 residues: Nuclear hormone receptor family member nhr-167 (343 aa).

Positions 5-81 (HQKCAVCGRF…VGMTLPSYLL (77 aa)) form a DNA-binding region, nuclear receptor. 2 consecutive NR C4-type zinc fingers follow at residues 8 to 28 (CAVC…CNSC) and 45 to 64 (CFRG…CTSC). One can recognise an NR LBD domain in the interval 101 to 339 (THNKRMDSLF…KKLVKDGIEA (239 aa)).

This sequence belongs to the nuclear hormone receptor family.

Its subcellular location is the nucleus. In terms of biological role, orphan nuclear receptor. The polypeptide is Nuclear hormone receptor family member nhr-167 (nhr-167) (Caenorhabditis elegans).